The following is a 118-amino-acid chain: Large ribosomal subunit protein uL18 (118 aa).

Belongs to the universal ribosomal protein uL18 family. Part of the 50S ribosomal subunit; part of the 5S rRNA/L5/L18/L25 subcomplex. Contacts the 5S and 23S rRNAs.

Its function is as follows. This is one of the proteins that bind and probably mediate the attachment of the 5S RNA into the large ribosomal subunit, where it forms part of the central protuberance. The polypeptide is Large ribosomal subunit protein uL18 (Helicobacter hepaticus (strain ATCC 51449 / 3B1)).